The chain runs to 150 residues: Group IIC secretory phospholipase A2 (150 aa).

The signal sequence occupies residues 1 to 20 (MKGIAIFLVFIFYWTTSTLS). 8 cysteine pairs are disulfide-bonded: Cys-46–Cys-143, Cys-48–Cys-64, Cys-63–Cys-121, Cys-69–Cys-150, Cys-70–Cys-114, Cys-79–Cys-107, Cys-97–Cys-112, and Cys-99–Cys-105. 3 residues coordinate Ca(2+): Tyr-47, Gly-49, and Gly-51. His-67 is an active-site residue. Asp-68 contacts Ca(2+). Asn-92 is a glycosylation site (N-linked (GlcNAc...) asparagine). Residue Asp-115 is part of the active site.

Belongs to the phospholipase A2 family. Ca(2+) serves as cofactor. As to expression, testis specific.

It localises to the secreted. The catalysed reaction is a 1,2-diacyl-sn-glycero-3-phosphocholine + H2O = a 1-acyl-sn-glycero-3-phosphocholine + a fatty acid + H(+). PA2 catalyzes the calcium-dependent hydrolysis of the 2-acyl groups in 3-sn-phosphoglycerides. Testis PA2 may be important in the production of prostaglandins, by the release of arachidonic acid, which in turn are necessary for the contractions of the seminiferous tubules and the testicular capsule; they also seem to decrease sperm transit time through the male reproductive tract. The chain is Group IIC secretory phospholipase A2 (Pla2g2c) from Mus musculus (Mouse).